The primary structure comprises 749 residues: Probable serine/threonine-protein kinase drkC (749 aa).

Residues 1–31 (MIIINKYIRMNKIAILFSFFILICCTGYSIS) form the signal peptide. Residues 32–423 (YKINGINENK…TSPNYQKIIY (392 aa)) lie on the Extracellular side of the membrane. Residues 124–153 (DRTDQVSTSSSSSSFSEENKKSSSDDSAPA) form a disordered region. The span at 130–139 (STSSSSSSFS) shows a compositional bias: low complexity. Asn157, Asn189, Asn283, Asn358, Asn373, Asn381, and Asn397 each carry an N-linked (GlcNAc...) asparagine glycan. The helical transmembrane segment at 424–444 (IVVGVGIAVLLIIAVGIYFII) threads the bilayer. Over 445 to 749 (RLRIKNKRLN…QEIVKRLEAM (305 aa)) the chain is Cytoplasmic. The region spanning 491–749 (IVVQNRIGRG…QEIVKRLEAM (259 aa)) is the Protein kinase domain. ATP-binding positions include 497 to 505 (IGRGSCAEV) and Lys518. Catalysis depends on Asp615, which acts as the Proton acceptor.

The protein belongs to the protein kinase superfamily. TKL Ser/Thr protein kinase family.

Its subcellular location is the membrane. The enzyme catalyses L-seryl-[protein] + ATP = O-phospho-L-seryl-[protein] + ADP + H(+). The catalysed reaction is L-threonyl-[protein] + ATP = O-phospho-L-threonyl-[protein] + ADP + H(+). The protein is Probable serine/threonine-protein kinase drkC (drkC) of Dictyostelium discoideum (Social amoeba).